We begin with the raw amino-acid sequence, 1157 residues long: Cyclin-dependent kinase 12 (1157 aa).

The segment at 15 to 540 (SDVSSEDFSD…RSPTSRDLKH (526 aa)) is disordered. Positions 18 to 32 (SSEDFSDQEAGDLDA) are enriched in acidic residues. The span at 55–76 (GRLDAKPDKEGYDNYRSRRAED) shows a compositional bias: basic and acidic residues. The span at 85–94 (SRQTSSSEAT) shows a compositional bias: polar residues. Threonine 106 is subject to Phosphothreonine. A compositionally biased stretch (basic residues) spans 134 to 162 (RQKRKKQKKEKHKHKSKKKSKKRKKKRAK). The segment covering 163–176 (SYSSIDSMSDNDIN) has biased composition (low complexity). Threonine 184 bears the Phosphothreonine mark. A compositionally biased stretch (polar residues) spans 189–215 (PSKSNERTVSAAPSSFTPHNLKESSSP). Serine 190 and serine 192 each carry phosphoserine. Threonine 217 carries the phosphothreonine modification. A compositionally biased stretch (polar residues) spans 224–255 (PNTNSNYYGESSLETANSALGSNLQVTVTNKQ). A compositionally biased stretch (low complexity) spans 256 to 281 (SISNRLRSPPPSSRSSGNGPRFGNSP). Serine 280 is subject to Phosphoserine. Threonine 283 carries the phosphothreonine modification. A phosphoserine mark is found at serine 291, serine 301, and serine 314. Residues 315-332 (PHKEDVSAHHRSSHDHGY) are compositionally biased toward basic and acidic residues. A Phosphoserine modification is found at serine 353. Phosphothreonine is present on threonine 365. A compositionally biased stretch (basic and acidic residues) spans 392–403 (GKYERYSRDRYS). Residues 408 to 422 (RSPSVQHSRSRQSPS) are compositionally biased toward low complexity. The segment covering 444–468 (TTVSSTPSHTTRTSKRASGTGTSGD) has biased composition (polar residues). Over residues 473–484 (SPRTSSRYMESS) the composition is skewed to low complexity. 2 positions are modified to phosphoserine: serine 487 and serine 492. Over residues 495–508 (HHYHHRRSPRMRQR) the composition is skewed to basic residues. Low complexity predominate over residues 518 to 533 (PSSASSESSASRSRSP). A Phosphoserine modification is found at serine 553. Disordered regions lie at residues 574–661 (ERQE…ADVP) and 675–782 (PFSA…QRPV). Positions 586 to 603 (GALTINDNSSSVDGNTPN) are enriched in polar residues. A compositionally biased stretch (low complexity) spans 609-623 (SAPGSGTPAAASTTS). 2 stretches are compositionally biased toward polar residues: residues 644–656 (NKQN…NPAS) and 721–731 (VTSSGSANKSV). Phosphoserine occurs at positions 730, 743, 747, and 755. The segment covering 746-760 (LSGDDDVIDSPEDFD) has biased composition (acidic residues). The region spanning 804 to 1098 (FEMIAQIGEG…AEDALRSPWL (295 aa)) is the Protein kinase domain. Residues 810-818 (IGEGTYGQV), lysine 833, and 891-896 (EYMDHD) each bind ATP. Aspartate 936 acts as the Proton acceptor in catalysis. Position 1118 (histidine 1118) interacts with ATP.

This sequence belongs to the protein kinase superfamily. CMGC Ser/Thr protein kinase family. CDC2/CDKX subfamily. As to quaternary structure, interacts with cyclin CycK.

The protein resides in the nucleus. The protein localises to the chromosome. It carries out the reaction [DNA-directed RNA polymerase] + ATP = phospho-[DNA-directed RNA polymerase] + ADP + H(+). It catalyses the reaction L-seryl-[protein] + ATP = O-phospho-L-seryl-[protein] + ADP + H(+). The enzyme catalyses L-threonyl-[protein] + ATP = O-phospho-L-threonyl-[protein] + ADP + H(+). In terms of biological role, cyclin-dependent kinase which displays CTD kinase activity: hyperphosphorylates the C-terminal heptapeptide repeat domain (CTD) of the largest RNA polymerase II subunit, thereby acting as a key regulator of transcription elongation. The sequence is that of Cyclin-dependent kinase 12 (Cdk12) from Drosophila melanogaster (Fruit fly).